Reading from the N-terminus, the 610-residue chain is MEQPINVLNDFHPLNEAGKILIKHPSLAERKDEDGIHWIKSQWDGKWYPEKFSDYLRLHKIVKIPNNSDKPELFQTYKDKNNKRSRYMGLPNLKRANIKTQWTREMVEEWKKCRDDIVYFAETYCAITHIDYGVIKVQLRDYQRDMLKIMSSKRMTVCNLSRQLGKTTVVAIFLAHFVCFNKDKAVGILAHKGSMSAEVLDRTKQAIELLPDFLQPGIVEWNKGSIELDNGSSIGAYASSPDAVRGNSFAMIYIDECAFIPNFHDSWLAIQPVISSGRRSKIIITTTPNGLNHFYDIWTAAVEGKSGFEPYTAIWNSVKERLYNDEDIFDDGWQWSIQTINGSSLAQFRQEHTAAFEGTSGTLISGMKLAVMDFIEVTPDDHGFHQFKKPEPDRKYIATLDCSEGRGQDYHALHIIDVTDDVWEQVGVLHSNTISHLILPDIVMRYLVEYNECPVYIELNSTGVSVAKSLYMDLEYEGVICDSYTDLGMKQTKRTKAVGCSTLKDLIEKDKLIIHHRATIQEFRTFSEKGVSWAAEEGYHDDLVMSLVIFGWLSTQSKFIDYADKDDMRLASEVFSKELQDMSDDYAPVIFVDSVHSAEYVPVSHGMSMV.

Residues 30 to 94 (RKDEDGIHWI…SRYMGLPNLK (65 aa)) form a ssDNA-binding region. Positions 131–301 (DYGVIKVQLR…NHFYDIWTAA (171 aa)) are ATPase activity. 2 residues coordinate ATP: Gln138 and Gln143. Positions 161–167 (SRQLGKT) match the Walker A motif motif. Arg202 is a binding site for ATP. The Walker B motif motif lies at 251 to 256 (MIYIDE). Glu256 serves as the catalytic For ATPase activity. Residues 285–287 (TTT) carry the ATPase coupling motif. Residues 328 to 352 (IFDDGWQWSIQTINGSSLAQFRQEH) form a binding to the portal protein region. Residues 360 to 559 (SGTLISGMKL…FGWLSTQSKF (200 aa)) form a nuclease activity region. Residues Asp401, Glu458, and Asp542 each contribute to the Mg(2+) site.

Belongs to the Tequatrovirus large terminase family. Interacts with the terminase small subunit; the active complex is composed of a pentamer of terminase large subunits and a dodecamer of terminase small subunits. Interacts with the portal protein. Interacts with the RNA polymerase sigma factor gp55. Mg(2+) is required as a cofactor. In terms of processing, phosphorylated.

With respect to regulation, stimulated up to 50 to 100-fold by the terminase small subunit. Modestly activated by portal protein and single-stranded binding protein gp32 multimers. The terminase large subunit acts as an ATP driven molecular motor necessary for viral DNA translocation into empty capsids and as an endonuclease that cuts the viral genome to initiate and to end a packaging reaction. The terminase lies at a unique vertex of the procapsid and is composed of two subunits, a small terminase subunit involved in viral DNA recognition (packaging sequence), and a large terminase subunit possessing endonucleolytic and ATPase activities. Both terminase subunits heterooligomerize and are docked on the portal protein to form the packaging machine. The terminase large subunit exhibits endonuclease activity and cleaves the viral genome concatemer once the capsid is full (headful packaging). Once the capsid is packaged with the DNA, the terminase complex is substituted by the tail. The polypeptide is Terminase, large subunit (17) (Escherichia coli (Bacteriophage T4)).